The following is a 161-amino-acid chain: Phosphopantetheine adenylyltransferase (161 aa).

Ser-9 is a substrate binding site. ATP is bound by residues 9 to 10 (SF) and His-17. Substrate-binding residues include Lys-41, Thr-74, and Arg-88. Residues 89 to 91 (GVR), Glu-99, and 124 to 130 (NSFVASS) each bind ATP.

The protein belongs to the bacterial CoaD family. As to quaternary structure, homohexamer. Mg(2+) serves as cofactor.

The protein resides in the cytoplasm. The catalysed reaction is (R)-4'-phosphopantetheine + ATP + H(+) = 3'-dephospho-CoA + diphosphate. It participates in cofactor biosynthesis; coenzyme A biosynthesis; CoA from (R)-pantothenate: step 4/5. Functionally, reversibly transfers an adenylyl group from ATP to 4'-phosphopantetheine, yielding dephospho-CoA (dPCoA) and pyrophosphate. The polypeptide is Phosphopantetheine adenylyltransferase (Lactobacillus acidophilus (strain ATCC 700396 / NCK56 / N2 / NCFM)).